A 99-amino-acid chain; its full sequence is Beta-2-microglobulin (99 aa).

An Ig-like C1-type domain is found at 5 to 93 (PRVQVYSRHP…HITLSEPKIV (89 aa)). Cysteines 25 and 80 form a disulfide.

It belongs to the beta-2-microglobulin family. In terms of assembly, heterodimer of an alpha chain and a beta chain. Beta-2-microglobulin is the beta-chain of major histocompatibility complex class I molecules.

It localises to the secreted. Its function is as follows. Component of the class I major histocompatibility complex (MHC). Involved in the presentation of peptide antigens to the immune system. This chain is Beta-2-microglobulin (B2M), found in Cavia porcellus (Guinea pig).